The sequence spans 197 residues: dTTP/UTP pyrophosphatase (197 aa).

Asp-70 functions as the Proton acceptor in the catalytic mechanism.

It belongs to the Maf family. YhdE subfamily. Homodimer. Can also form homotetramers. The cofactor is a divalent metal cation.

It is found in the cytoplasm. The catalysed reaction is dTTP + H2O = dTMP + diphosphate + H(+). It carries out the reaction UTP + H2O = UMP + diphosphate + H(+). The enzyme catalyses 5-methyl-UTP + H2O = 5-methyl-UMP + diphosphate + H(+). It catalyses the reaction psi-UTP + H2O = psi-UMP + diphosphate + H(+). The catalysed reaction is 5-methyl-CTP + H2O = 5-methyl-CMP + diphosphate + H(+). Its function is as follows. Nucleoside triphosphate pyrophosphatase that hydrolyzes dTTP and UTP. Can also hydrolyze TTP and the modified nucleotides 5-methyl-UTP (m(5)UTP), pseudo-UTP and 5-methyl-CTP (m(5)CTP). Has weak activity with CTP. May have a dual role in cell division arrest and in preventing the incorporation of modified nucleotides into cellular nucleic acids. Important in maintenance of cell shape. In Escherichia coli (strain K12), this protein is dTTP/UTP pyrophosphatase (yhdE).